We begin with the raw amino-acid sequence, 513 residues long: Putative thymidine phosphorylase (513 aa).

This sequence belongs to the thymidine/pyrimidine-nucleoside phosphorylase family. Type 2 subfamily.

The enzyme catalyses thymidine + phosphate = 2-deoxy-alpha-D-ribose 1-phosphate + thymine. This Bradyrhizobium diazoefficiens (strain JCM 10833 / BCRC 13528 / IAM 13628 / NBRC 14792 / USDA 110) protein is Putative thymidine phosphorylase.